Here is a 440-residue protein sequence, read N- to C-terminus: tRNA-2-methylthio-N(6)-dimethylallyladenosine synthase (440 aa).

An MTTase N-terminal domain is found at Lys4–Glu122. 6 residues coordinate [4Fe-4S] cluster: Cys13, Cys49, Cys83, Cys159, Cys163, and Cys166. Positions Arg145–Glu375 constitute a Radical SAM core domain. Residues Lys378 to Val440 enclose the TRAM domain.

This sequence belongs to the methylthiotransferase family. MiaB subfamily. Monomer. Requires [4Fe-4S] cluster as cofactor.

The protein resides in the cytoplasm. The enzyme catalyses N(6)-dimethylallyladenosine(37) in tRNA + (sulfur carrier)-SH + AH2 + 2 S-adenosyl-L-methionine = 2-methylsulfanyl-N(6)-dimethylallyladenosine(37) in tRNA + (sulfur carrier)-H + 5'-deoxyadenosine + L-methionine + A + S-adenosyl-L-homocysteine + 2 H(+). Its function is as follows. Catalyzes the methylthiolation of N6-(dimethylallyl)adenosine (i(6)A), leading to the formation of 2-methylthio-N6-(dimethylallyl)adenosine (ms(2)i(6)A) at position 37 in tRNAs that read codons beginning with uridine. The protein is tRNA-2-methylthio-N(6)-dimethylallyladenosine synthase of Carboxydothermus hydrogenoformans (strain ATCC BAA-161 / DSM 6008 / Z-2901).